The primary structure comprises 198 residues: uncharacterized protein (198 aa).

This is an uncharacterized protein from Homo sapiens (Human).